A 267-amino-acid chain; its full sequence is Tryptophan synthase alpha chain (267 aa).

Catalysis depends on proton acceptor residues E49 and D60.

This sequence belongs to the TrpA family. As to quaternary structure, tetramer of two alpha and two beta chains.

It catalyses the reaction (1S,2R)-1-C-(indol-3-yl)glycerol 3-phosphate + L-serine = D-glyceraldehyde 3-phosphate + L-tryptophan + H2O. It functions in the pathway amino-acid biosynthesis; L-tryptophan biosynthesis; L-tryptophan from chorismate: step 5/5. Functionally, the alpha subunit is responsible for the aldol cleavage of indoleglycerol phosphate to indole and glyceraldehyde 3-phosphate. This chain is Tryptophan synthase alpha chain, found in Geobacter sp. (strain M21).